A 350-amino-acid polypeptide reads, in one-letter code: DNA polymerase IV (350 aa).

The 182-residue stretch at 6 to 187 (IIHIDMDAFY…LPVEKIFGIG (182 aa)) folds into the UmuC domain. Residues Asp-10 and Asp-105 each contribute to the Mg(2+) site. The active site involves Glu-106.

The protein belongs to the DNA polymerase type-Y family. As to quaternary structure, monomer. Requires Mg(2+) as cofactor.

It localises to the cytoplasm. It carries out the reaction DNA(n) + a 2'-deoxyribonucleoside 5'-triphosphate = DNA(n+1) + diphosphate. In terms of biological role, poorly processive, error-prone DNA polymerase involved in untargeted mutagenesis. Copies undamaged DNA at stalled replication forks, which arise in vivo from mismatched or misaligned primer ends. These misaligned primers can be extended by PolIV. Exhibits no 3'-5' exonuclease (proofreading) activity. May be involved in translesional synthesis, in conjunction with the beta clamp from PolIII. In Protochlamydia amoebophila (strain UWE25), this protein is DNA polymerase IV.